Consider the following 351-residue polypeptide: Photosystem II D2 protein (351 aa).

A helical membrane pass occupies residues 39–59 (CAYLAVGGWLTGTTFVTSWYT). Histidine 116 provides a ligand contact to chlorophyll a. A helical membrane pass occupies residues 123-139 (GFCLRQFEIARLVGLRP). Pheophytin a-binding residues include glutamine 128 and asparagine 141. A helical transmembrane segment spans residues 151-164 (VFVSVFLMYPLGQA). Histidine 196 contacts chlorophyll a. Residues 206-226 (GALLCAIHGATVQNTLFEDGD) form a helical membrane-spanning segment. Positions 213 and 260 each coordinate a plastoquinone. Residue histidine 213 participates in Fe cation binding. Histidine 267 provides a ligand contact to Fe cation. Residues 277-293 (GLWTSAFGIVGLALNLR) traverse the membrane as a helical segment.

This sequence belongs to the reaction center PufL/M/PsbA/D family. PSII is composed of 1 copy each of membrane proteins PsbA, PsbB, PsbC, PsbD, PsbE, PsbF, PsbH, PsbI, PsbJ, PsbK, PsbL, PsbM, PsbT, PsbX, PsbY, PsbZ, Psb30/Ycf12, at least 3 peripheral proteins of the oxygen-evolving complex and a large number of cofactors. It forms dimeric complexes. Requires The D1/D2 heterodimer binds P680, chlorophylls that are the primary electron donor of PSII, and subsequent electron acceptors. It shares a non-heme iron and each subunit binds pheophytin, quinone, additional chlorophylls, carotenoids and lipids. There is also a Cl(-1) ion associated with D1 and D2, which is required for oxygen evolution. The PSII complex binds additional chlorophylls, carotenoids and specific lipids. as cofactor.

The protein resides in the plastid. Its subcellular location is the chloroplast thylakoid membrane. It catalyses the reaction 2 a plastoquinone + 4 hnu + 2 H2O = 2 a plastoquinol + O2. In terms of biological role, photosystem II (PSII) is a light-driven water:plastoquinone oxidoreductase that uses light energy to abstract electrons from H(2)O, generating O(2) and a proton gradient subsequently used for ATP formation. It consists of a core antenna complex that captures photons, and an electron transfer chain that converts photonic excitation into a charge separation. The D1/D2 (PsbA/PsbD) reaction center heterodimer binds P680, the primary electron donor of PSII as well as several subsequent electron acceptors. D2 is needed for assembly of a stable PSII complex. The protein is Photosystem II D2 protein of Porphyra purpurea (Red seaweed).